A 53-amino-acid chain; its full sequence is Insulin (53 aa).

The propeptide at 1 to 30 (DVEPLLGFLSPKSGQENEVDDFPYKGQGEL) is c peptide. An intrachain disulfide couples Cys-38 to Cys-43.

It belongs to the insulin family. Heterodimer of a B chain and an A chain linked by two disulfide bonds.

The protein resides in the secreted. Its function is as follows. Insulin decreases blood glucose concentration. It increases cell permeability to monosaccharides, amino acids and fatty acids. It accelerates glycolysis, the pentose phosphate cycle, and glycogen synthesis in liver. The protein is Insulin (ins) of Anguilla anguilla (European freshwater eel).